We begin with the raw amino-acid sequence, 1288 residues long: Mitogen-activated protein kinase kinase kinase 6 (1288 aa).

The Protein kinase domain occupies 648–906 (TGERLVLGKG…AQTLLGDPFL (259 aa)). Residues 654-662 (LGKGTYGVV) and Lys677 each bind ATP. Catalysis depends on Asp771, which acts as the Proton acceptor. A Phosphothreonine modification is found at Thr806. The segment at 899–997 (TLLGDPFLQP…SSGLSLLHQE (99 aa)) is disordered. The segment covering 914–952 (SPSSPRHAPRPSDAPSASPTPSANSTTQSQTFPCPQAPS) has biased composition (low complexity). Phosphoserine occurs at positions 964 and 984. The span at 980-989 (EEPASPEESS) shows a compositional bias: low complexity. Positions 1004-1029 (LAAVLEQELPALAENLHQEQKQEQGA) form a coiled coil. Basic and acidic residues predominate over residues 1123-1134 (VEKEAVSPRSEE). The interval 1123–1157 (VEKEAVSPRSEELSNEGDSQQSPGQQSPLPVEPEQ) is disordered. Ser1129 and Ser1149 each carry phosphoserine. Positions 1141 to 1151 (SQQSPGQQSPL) are enriched in low complexity. A coiled-coil region spans residues 1166–1205 (LSLLRAETDRLREILAGKEREYQALVQRALQRLNEEARTY).

This sequence belongs to the protein kinase superfamily. STE Ser/Thr protein kinase family. MAP kinase kinase kinase subfamily. As to quaternary structure, binds both upstream activators and downstream substrates in multimolecular complexes. It depends on Mg(2+) as a cofactor.

It catalyses the reaction L-seryl-[protein] + ATP = O-phospho-L-seryl-[protein] + ADP + H(+). It carries out the reaction L-threonyl-[protein] + ATP = O-phospho-L-threonyl-[protein] + ADP + H(+). Activated by phosphorylation on Thr-806. Catalytically active only when complexed with MAP3K5, with MAP3K5 supporting the stability and the active configuration of MAP3K6 and MAP3K6 activating MAP3K5 by direct phosphorylation. Its function is as follows. Component of a protein kinase signal transduction cascade. Activates the JNK, but not ERK or p38 kinase pathways. This is Mitogen-activated protein kinase kinase kinase 6 (MAP3K6) from Homo sapiens (Human).